The sequence spans 192 residues: Putative cyclic ADP-D-ribose synthase ThsB1 (192 aa).

It belongs to the Thoeris B TIR-like family. In terms of assembly, monomer; not seen to interact with ThsA.

The protein resides in the cytoplasm. Activated upon phage infection. TIR-like domain-containing component of the Thoeris antiviral defense system, composed of ThsA and ThsB. Expression of ThsA and ThsB in B.subtilis (strain BEST7003) confers resistance to phages SBSphiC, SBSphiJ and SPO1. Phage infection activates this protein so that 30 to 45 minutes post-infection with phage SPO1 it generates a signal molecule that in turn activates the NAD(+) hydrolase activity of ThsA. The signal is similar to cyclic ADP-D-ribose, but how it differs is unknown. In vitro purified (but unactivated) ThsB has no NAD(+) hydrolyzing activity, no activity on AMP, CMP, GMP or UMP, does not alter the activity of ThsA, does not bind DNA. Hydrolyzes NAD(+) to make a cyclic ADP-D-ribose (cADPR) signaling molecule; might make 3'cADPR. The sequence is that of Putative cyclic ADP-D-ribose synthase ThsB1 from Bacillus cereus (strain MSX-D12).